The chain runs to 744 residues: Leukocyte immunoglobulin-like receptor subfamily B member 3A (744 aa).

An N-terminal signal peptide occupies residues Met-1–Gly-24. Topologically, residues Ser-25–Lys-543 are extracellular. Ig-like C2-type domains are found at residues Leu-26–Gly-119, Tyr-121–Gly-221, Leu-223–Gly-316, Tyr-320–Gly-419, and Phe-426–Gly-520. 3 cysteine pairs are disulfide-bonded: Cys-49/Cys-98, Cys-144/Cys-197, and Cys-246/Cys-295. An N-linked (GlcNAc...) asparagine glycan is attached at Asn-79. Residue Asn-338 is glycosylated (N-linked (GlcNAc...) asparagine). Residues Cys-343 and Cys-395 are joined by a disulfide bond. N-linked (GlcNAc...) asparagine glycosylation occurs at Asn-440. Cys-445 and Cys-496 are oxidised to a cystine. Residues Ala-544 to Leu-564 traverse the membrane as a helical segment. The Cytoplasmic portion of the chain corresponds to Arg-565–Gln-744. The span at Phe-572–Glu-584 shows a compositional bias: basic and acidic residues. 3 disordered regions span residues Phe-572–Tyr-617, Glu-630–Ser-652, and Glu-667–Gln-744. The ITIM motif 1 motif lies at Ser-615–Val-620. 2 consecutive short sequence motifs (ITIM motif) follow at residues Val-695–Leu-700 and Ser-725–Leu-730. Phosphotyrosine; by LYN is present on residues Tyr-697 and Tyr-727.

In terms of assembly, interacts with LYN, PTPN6/SHP-1 and PTPN11/SHP-2. Phosphorylated on tyrosine residues by LYN. Phosphorylation at Tyr-697 and Tyr-727 is important for interaction with PTPN6/SHP-1 and PTPN11/SHP-2.

The protein resides in the cell membrane. Its function is as follows. May act as receptor for class I MHC antigens. Becomes activated upon coligation with immune receptors, such as FCGR2B and the B-cell receptor. Down-regulates antigen-induced B-cell activation by recruiting phosphatases to its immunoreceptor tyrosine-based inhibitor motifs (ITIM). This is Leukocyte immunoglobulin-like receptor subfamily B member 3A from Rattus norvegicus (Rat).